The following is a 392-amino-acid chain: Methylthioribose-1-phosphate isomerase (392 aa).

Asp-267 serves as the catalytic Proton donor.

This sequence belongs to the eIF-2B alpha/beta/delta subunits family. MtnA subfamily.

Its subcellular location is the cytoplasm. It is found in the nucleus. It catalyses the reaction 5-(methylsulfanyl)-alpha-D-ribose 1-phosphate = 5-(methylsulfanyl)-D-ribulose 1-phosphate. Its pathway is amino-acid biosynthesis; L-methionine biosynthesis via salvage pathway; L-methionine from S-methyl-5-thio-alpha-D-ribose 1-phosphate: step 1/6. Its function is as follows. Catalyzes the interconversion of methylthioribose-1-phosphate (MTR-1-P) into methylthioribulose-1-phosphate (MTRu-1-P). In Blastomyces gilchristii (strain SLH14081) (Blastomyces dermatitidis), this protein is Methylthioribose-1-phosphate isomerase.